A 144-amino-acid polypeptide reads, in one-letter code: Large ribosomal subunit protein uL15 (144 aa).

Positions 1 to 25 (MFLNTIGARDGSRPEKKRVGRGIGS) are disordered.

Belongs to the universal ribosomal protein uL15 family. In terms of assembly, part of the 50S ribosomal subunit.

In terms of biological role, binds to the 23S rRNA. The protein is Large ribosomal subunit protein uL15 of Methylococcus capsulatus (strain ATCC 33009 / NCIMB 11132 / Bath).